Here is a 150-residue protein sequence, read N- to C-terminus: Macrodomain Ter protein (150 aa).

This sequence belongs to the MatP family. Homodimer.

The protein localises to the cytoplasm. In terms of biological role, required for spatial organization of the terminus region of the chromosome (Ter macrodomain) during the cell cycle. Prevents early segregation of duplicated Ter macrodomains during cell division. Binds specifically to matS, which is a 13 bp signature motif repeated within the Ter macrodomain. The chain is Macrodomain Ter protein from Erwinia tasmaniensis (strain DSM 17950 / CFBP 7177 / CIP 109463 / NCPPB 4357 / Et1/99).